Consider the following 349-residue polypeptide: Glycosyltransferase 8 domain-containing protein 2 (349 aa).

The Cytoplasmic segment spans residues 1-6 (MAFLRK). Residues 7–24 (VNQVLLLLLVLTLCGILY) traverse the membrane as a helical; Signal-anchor for type II membrane protein segment. Over 25-349 (KKVHKGAVLK…AGIFKLHHNR (325 aa)) the chain is Lumenal. An N-linked (GlcNAc...) asparagine glycan is attached at Asn-234.

Belongs to the glycosyltransferase 8 family.

It is found in the membrane. This is Glycosyltransferase 8 domain-containing protein 2 (Glt8d2) from Mus musculus (Mouse).